The following is a 338-amino-acid chain: Plasminogen (338 aa).

Residues 9–88 (CMLGIGKGYQ…LFDYCDVPQC (80 aa)) form the Kringle 5 domain. Intrachain disulfides connect Cys9-Cys88, Cys30-Cys71, Cys59-Cys83, Cys95-Cys213, Cys105-Cys113, Cys135-Cys151, Cys227-Cys294, Cys257-Cys273, and Cys284-Cys312. The Peptidase S1 domain occupies 109–336 (IVGGCVAIAH…FINWIERIMQ (228 aa)). Ser125 bears the Phosphoserine mark. Active-site charge relay system residues include His150 and Asp193. The Charge relay system role is filled by Ser288.

Belongs to the peptidase S1 family. Plasminogen subfamily. Interacts with CSPG4 and AMOT. Interacts (via the Kringle domains) with HRG; the interaction tethers PLG to the cell surface and enhances its activation. Interacts (via Kringle 4 domain) with ADA; the interaction stimulates PLG activation when in complex with DPP4. Angiostatin: Interacts with ATP5F1A; the interaction inhibits most of the angiogenic effects of angiostatin.

It localises to the secreted. It catalyses the reaction Preferential cleavage: Lys-|-Xaa &gt; Arg-|-Xaa, higher selectivity than trypsin. Converts fibrin into soluble products.. Converted into plasmin by plasminogen activators, both plasminogen and its activator being bound to fibrin. Activated with catalytic amounts of streptokinase. Plasmin dissolves the fibrin of blood clots and acts as a proteolytic factor in a variety of other processes including embryonic development, tissue remodeling, tumor invasion, and inflammation. In ovulation, weakens the walls of the Graafian follicle. It activates the urokinase-type plasminogen activator, collagenases and several complement zymogens, such as C1, C4 and C5. Cleavage of fibronectin and laminin leads to cell detachment and apoptosis. Also cleaves fibrin, thrombospondin and von Willebrand factor. Its role in tissue remodeling and tumor invasion may be modulated by CSPG4. Binds to cells. This Equus caballus (Horse) protein is Plasminogen (PLG).